An 869-amino-acid chain; its full sequence is NACHT, LRR and PYD domains-containing protein 6 (869 aa).

In terms of domain architecture, Pyrin spans 37–128; that stretch reads KLRDAPLDGR…REHVLRQHAK (92 aa). In terms of domain architecture, NACHT spans 194 to 511; it reads LTVVLQGPAG…EFLAALSYLL (318 aa). 200-207 contributes to the ATP binding site; that stretch reads GPAGIGKT. Residues 350-354 are disordered; that stretch reads KDKKK. The LRR 1 repeat unit spans residues 460 to 485; that stretch reads EEDLEKLKLRGSQVQTIFLNKKEIPG. The segment at 577–608 is disordered; sequence VQGQSHPKGPPVGAKKTAELEDIEDAEEEEEE. The span at 596–608 shows a compositional bias: acidic residues; sequence LEDIEDAEEEEEE. LRR repeat units follow at residues 635 to 658 and 837 to 860; these read LSSL…VLNY and TLSL…KTSK.

This sequence belongs to the NLRP family. Homomultimer; forms the NLRP6 inflammasome polymeric complex, a filament composed of homopolymers in response to pathogens and other damage-associated signals. The core of NLRP6 inflammasomes consists of a signal sensor component (NLRP6), an adapter (PYCARD/ASC), which recruits effector pro-inflammatory caspases (CASP1 and CASP4). Interacts (via pyrin domain) with PYCARD/ASC (via pyrin domain); interaction takes place following NLRP6 activation and formation of liquid-liquid phase separation (LLPS), initiating nucleation which greatly enhances further addition of soluble PYCARD/ASC molecules to the speck in a prion-like polymerization process. Clustered PYCARD/ASC nucleates the formation of CASP1 (or possibly CASP4) filaments through the interaction of their respective CARD domains, acting as a platform for CASP1 polymerization. CASP1 filament formation increases local enzyme concentration, resulting in trans-autocleavage and activation. Active CASP1 then processes IL1B and IL18 precursors, leading to the release of mature cytokines in the extracellular milieu and inflammatory response. Interacts with DHX15. Polyubiquitinated with 'Lys-63'-linked chains, promoting the interaction with PYCARD/ASC and formation of the NLRP6 inflammasome. Deubiquitination by CYLD decreases the interaction with PYCARD/ASC. As to expression, highly expressed in the gastrointestinal tract, predominantly in colonic myofibroblasts and in colonic epithelial and endothelial cells. Within the intestinal mucosa, highly expressed by goblet cells. Also expressed in hepatocytes and in immune cells, including CD4(+) and CD8(+) T-cells, dendritic cells, mastocytes and peritoneal macrophages, as well as in lung, kidney, bladder and gonads.

It localises to the cytoplasm. Its subcellular location is the inflammasome. The protein resides in the cell membrane. It is found in the nucleus membrane. Its function is as follows. Acts as the sensor component of the NLRP6 inflammasome, which mediates inflammasome activation in response to various pathogen-associated signals, leading to maturation and secretion of IL1B and IL18. Inflammasomes are supramolecular complexes that assemble in the cytosol in response to pathogens and other damage-associated signals and play critical roles in innate immunity and inflammation. Acts as a recognition receptor (PRR): recognizes and binds specific pathogens and other damage-associated signals, such as lipoteichoic acid (LTA), a cell-wall component of Gram-positive bacteria, or double stranded RNA (dsRNA). May also recognize and bind lipopolysaccharide (LPS), a major component of the outer membrane of Gram-negative bacteria; however, LPS is probably not a major activator of the NLRP6 inflammasome. Following LTA- or dsRNA-binding, NLRP6 undergoes liquid-liquid phase separation (LLPS), enhancing multivalent interactions, an essential step for the formation of the NLRP6 inflammasome polymeric complex. The NLRP6 inflammasome acts by promoting recruitment of effector pro-inflammatory caspases (CASP1 and/or CASP4) that catalyze maturation and secretion of IL1B and IL18 in the extracellular milieu. The NLRP6 inflammasome plays a central role in the maintenance of epithelial integrity and host defense against microbial infections in the intestine. Required to restrict infection against Gram-positive bacteria by recognizing lipoteichoic acid (LTA), leading to recruitment of CASP4 and CASP1, and subsequent maturation and secretion of IL1B and IL18. Involved in intestinal antiviral innate immunity together with DHX15: recognizes and binds viral dsRNA to restrict infection by enteric viruses through the interferon pathway and GSDMD-dependent release of IL18. Required to prevent infection by the apicomplexan parasite C.tyzzeri in enterocytes by promoting GSDMD-dependent release of IL18. The NLRP6 inflammasome may also regulate the gut microbiota composition by acting as a sensor of microbiota-associated metabolites to form a PYCARD/ASC-dependent inflammasome for downstream IL18 release and secretion of antimicrobial peptides. Its role in the regulation of the gut microbiota composition is however subject to discussion. Essential for gut mucosal self-renewal and proliferation. Regulate mucus secretion in an inflammasome- and autophagy-dependent manner to prevent invasion by enteric bacteria. During systemic bacterial infections, the NLRP6 inflammasome negatively regulates neutrophil recruitment and neutrophil extracellular traps (NETs) formation. May promote peripheral nerve recovery following injury via an inflammasome-independent mechanism. This Mus musculus (Mouse) protein is NACHT, LRR and PYD domains-containing protein 6.